Reading from the N-terminus, the 561-residue chain is Membrane protein insertase YidC (561 aa).

6 helical membrane passes run isoleucine 7–tyrosine 27, leucine 342–leucine 362, leucine 368–phenylalanine 388, leucine 438–leucine 458, tryptophan 469–methionine 489, and proline 516–valine 536.

It belongs to the OXA1/ALB3/YidC family. Type 1 subfamily. In terms of assembly, interacts with the Sec translocase complex via SecD. Specifically interacts with transmembrane segments of nascent integral membrane proteins during membrane integration.

The protein localises to the cell inner membrane. In terms of biological role, required for the insertion and/or proper folding and/or complex formation of integral membrane proteins into the membrane. Involved in integration of membrane proteins that insert both dependently and independently of the Sec translocase complex, as well as at least some lipoproteins. Aids folding of multispanning membrane proteins. This Pseudomonas entomophila (strain L48) protein is Membrane protein insertase YidC.